The sequence spans 625 residues: RalA-binding protein 1 (625 aa).

Composition is skewed to basic and acidic residues over residues 1 to 11 (MDFDSPEEKEF) and 20 to 60 (ADAK…KDRG). Residues 1-172 (MDFDSPEEKE…SKQLSQQQDD (172 aa)) are disordered. Residues serine 68 and serine 69 each carry the phosphoserine modification. A compositionally biased stretch (basic and acidic residues) spans 94-157 (KSKEKREKSR…EKDKKADKKD (64 aa)). A Rho-GAP domain is found at 191–385 (VSLATERSRC…PLTSTSPKLP (195 aa)). A disordered region spans residues 443–500 (QEKTAEEVDNSSSAPPAVASEDTTDSKPAGTPAVSTNNSISQEEPKTDTLTPKDAPND). Over residues 475–484 (AVSTNNSISQ) the composition is skewed to polar residues.

Interacts with CycB and numb.

Its function is as follows. Participates in receptor endocytosis during interphase, is also involved in mitotic processes when endocytosis is switched off. This Drosophila melanogaster (Fruit fly) protein is RalA-binding protein 1.